We begin with the raw amino-acid sequence, 208 residues long: Uracil phosphoribosyltransferase (208 aa).

5-phospho-alpha-D-ribose 1-diphosphate contacts are provided by residues arginine 78, arginine 103, and aspartate 130–threonine 138. Residues isoleucine 193 and glycine 198–alanine 200 each bind uracil. Aspartate 199 contributes to the 5-phospho-alpha-D-ribose 1-diphosphate binding site.

This sequence belongs to the UPRTase family. Mg(2+) is required as a cofactor.

It carries out the reaction UMP + diphosphate = 5-phospho-alpha-D-ribose 1-diphosphate + uracil. It participates in pyrimidine metabolism; UMP biosynthesis via salvage pathway; UMP from uracil: step 1/1. Allosterically activated by GTP. Functionally, catalyzes the conversion of uracil and 5-phospho-alpha-D-ribose 1-diphosphate (PRPP) to UMP and diphosphate. The protein is Uracil phosphoribosyltransferase of Desulfotalea psychrophila (strain LSv54 / DSM 12343).